A 115-amino-acid chain; its full sequence is UPF0738 protein SSP1780 (115 aa).

It belongs to the UPF0738 family.

This chain is UPF0738 protein SSP1780, found in Staphylococcus saprophyticus subsp. saprophyticus (strain ATCC 15305 / DSM 20229 / NCIMB 8711 / NCTC 7292 / S-41).